Consider the following 494-residue polypeptide: Glutamate decarboxylase 2 (494 aa).

Lys276 bears the N6-(pyridoxal phosphate)lysine mark. Residues 463-494 (VKEKKMEKEILMEVIVGWRKFVKERKKMNGVC) form a calmodulin-binding region.

Belongs to the group II decarboxylase family. As to quaternary structure, homohexamer. Interacts with calmodulin. Pyridoxal 5'-phosphate is required as a cofactor. In terms of tissue distribution, expressed in roots, inflorescence stems, flowers, siliques and leaves.

It catalyses the reaction L-glutamate + H(+) = 4-aminobutanoate + CO2. With respect to regulation, up-regulated by calmodulin binding at physiological pH. Catalyzes the conversion of glutamate to 4-aminobutanoate (GABA). The calmodulin-binding is calcium-dependent and it is proposed to directly or indirectly form a calcium regulated control of GABA biosynthesis. This chain is Glutamate decarboxylase 2 (GAD2), found in Arabidopsis thaliana (Mouse-ear cress).